A 136-amino-acid chain; its full sequence is ATP synthase epsilon chain, chloroplastic (136 aa).

This sequence belongs to the ATPase epsilon chain family. As to quaternary structure, F-type ATPases have 2 components, CF(1) - the catalytic core - and CF(0) - the membrane proton channel. CF(1) has five subunits: alpha(3), beta(3), gamma(1), delta(1), epsilon(1). CF(0) has three main subunits: a, b and c.

It localises to the plastid. It is found in the chloroplast thylakoid membrane. Produces ATP from ADP in the presence of a proton gradient across the membrane. This chain is ATP synthase epsilon chain, chloroplastic, found in Cucumis sativus (Cucumber).